Reading from the N-terminus, the 290-residue chain is Urease accessory protein UreD (290 aa).

This sequence belongs to the UreD family. In terms of assembly, ureD, UreF and UreG form a complex that acts as a GTP-hydrolysis-dependent molecular chaperone, activating the urease apoprotein by helping to assemble the nickel containing metallocenter of UreC. The UreE protein probably delivers the nickel.

The protein resides in the cytoplasm. Its function is as follows. Required for maturation of urease via the functional incorporation of the urease nickel metallocenter. The sequence is that of Urease accessory protein UreD from Paenarthrobacter aurescens (strain TC1).